A 685-amino-acid chain; its full sequence is DNA ligase (685 aa).

NAD(+) is bound by residues 47 to 51 (DSEYD), 96 to 97 (SL), and Glu125. Lys127 serves as the catalytic N6-AMP-lysine intermediate. NAD(+) is bound by residues Arg148, Glu185, Lys304, and Lys328. Cys422, Cys425, Cys440, and Cys446 together coordinate Zn(2+). Positions 605–685 (ADAQPLKGQT…ELLALLAANA (81 aa)) constitute a BRCT domain.

It belongs to the NAD-dependent DNA ligase family. LigA subfamily. It depends on Mg(2+) as a cofactor. Mn(2+) is required as a cofactor.

The catalysed reaction is NAD(+) + (deoxyribonucleotide)n-3'-hydroxyl + 5'-phospho-(deoxyribonucleotide)m = (deoxyribonucleotide)n+m + AMP + beta-nicotinamide D-nucleotide.. Functionally, DNA ligase that catalyzes the formation of phosphodiester linkages between 5'-phosphoryl and 3'-hydroxyl groups in double-stranded DNA using NAD as a coenzyme and as the energy source for the reaction. It is essential for DNA replication and repair of damaged DNA. The chain is DNA ligase from Shewanella baltica (strain OS195).